We begin with the raw amino-acid sequence, 299 residues long: ATP phosphoribosyltransferase (299 aa).

The protein belongs to the ATP phosphoribosyltransferase family. Long subfamily. As to quaternary structure, equilibrium between an active dimeric form, an inactive hexameric form and higher aggregates. Interconversion between the various forms is largely reversible and is influenced by the natural substrates and inhibitors of the enzyme. Requires Mg(2+) as cofactor.

It localises to the cytoplasm. It carries out the reaction 1-(5-phospho-beta-D-ribosyl)-ATP + diphosphate = 5-phospho-alpha-D-ribose 1-diphosphate + ATP. Its pathway is amino-acid biosynthesis; L-histidine biosynthesis; L-histidine from 5-phospho-alpha-D-ribose 1-diphosphate: step 1/9. Its activity is regulated as follows. Feedback inhibited by histidine. Its function is as follows. Catalyzes the condensation of ATP and 5-phosphoribose 1-diphosphate to form N'-(5'-phosphoribosyl)-ATP (PR-ATP). Has a crucial role in the pathway because the rate of histidine biosynthesis seems to be controlled primarily by regulation of HisG enzymatic activity. The polypeptide is ATP phosphoribosyltransferase (Shigella dysenteriae serotype 1 (strain Sd197)).